We begin with the raw amino-acid sequence, 676 residues long: DNA ligase (676 aa).

NAD(+)-binding positions include 42–46, 91–92, and glutamate 121; these read DDVYD and SL. The N6-AMP-lysine intermediate role is filled by lysine 123. The NAD(+) site is built by arginine 144, glutamate 178, lysine 294, and lysine 318. Residues cysteine 412, cysteine 415, cysteine 430, and cysteine 435 each contribute to the Zn(2+) site. Residues 596–676 enclose the BRCT domain; it reads NSTSEFTGKR…QLQAAMDETK (81 aa).

It belongs to the NAD-dependent DNA ligase family. LigA subfamily. It depends on Mg(2+) as a cofactor. Mn(2+) is required as a cofactor.

The enzyme catalyses NAD(+) + (deoxyribonucleotide)n-3'-hydroxyl + 5'-phospho-(deoxyribonucleotide)m = (deoxyribonucleotide)n+m + AMP + beta-nicotinamide D-nucleotide.. Its function is as follows. DNA ligase that catalyzes the formation of phosphodiester linkages between 5'-phosphoryl and 3'-hydroxyl groups in double-stranded DNA using NAD as a coenzyme and as the energy source for the reaction. It is essential for DNA replication and repair of damaged DNA. In Levilactobacillus brevis (strain ATCC 367 / BCRC 12310 / CIP 105137 / JCM 1170 / LMG 11437 / NCIMB 947 / NCTC 947) (Lactobacillus brevis), this protein is DNA ligase.